We begin with the raw amino-acid sequence, 220 residues long: Adenylate kinase (220 aa).

ATP is bound at residue Gly10–Thr15. The tract at residues Ser30–Val59 is NMP. Residues Thr31, Arg36, Gly57 to Val59, Gly85 to Arg88, and Gln92 each bind AMP. The tract at residues Gly126–Asp163 is LID. Arg127 is a binding site for ATP. Cys130, Cys133, Cys150, and Cys153 together coordinate Zn(2+). AMP-binding residues include Arg160 and Arg171. Leu199 provides a ligand contact to ATP.

The protein belongs to the adenylate kinase family. In terms of assembly, monomer.

The protein resides in the cytoplasm. The enzyme catalyses AMP + ATP = 2 ADP. Its pathway is purine metabolism; AMP biosynthesis via salvage pathway; AMP from ADP: step 1/1. In terms of biological role, catalyzes the reversible transfer of the terminal phosphate group between ATP and AMP. Plays an important role in cellular energy homeostasis and in adenine nucleotide metabolism. This Pelobacter propionicus (strain DSM 2379 / NBRC 103807 / OttBd1) protein is Adenylate kinase.